Here is a 686-residue protein sequence, read N- to C-terminus: Band 4.1-like protein 4A (686 aa).

The 289-residue stretch at 11 to 299 (FYCEVLLLDE…EHHTFFRMPD (289 aa)) folds into the FERM domain. At Ser-304 the chain carries Phosphoserine. 2 stretches are compositionally biased toward polar residues: residues 332-346 (DLSI…NVVR) and 357-382 (AQTQ…NEGT). Positions 332–669 (DLSIQLPRPN…LSTINPAGKP (338 aa)) are disordered. Phosphoserine occurs at positions 389, 393, and 402. Composition is skewed to polar residues over residues 418 to 428 (GPQSGLYNSSS) and 442 to 455 (RNLS…SSQL). Positions 479 to 489 (RCNTSSGSESE) are enriched in low complexity. Composition is skewed to basic and acidic residues over residues 518–527 (VLRRQKEKNQ) and 547–561 (QAKE…KELV). Positions 588–601 (IRHSHSPRSYRQYR) are enriched in basic residues. The span at 648-658 (GSKDSLIEEKS) shows a compositional bias: basic and acidic residues.

As to expression, brain, heart, lung, liver and spleen. Not detected in thymus and kidney.

Its subcellular location is the cytoplasm. It localises to the cytoskeleton. The chain is Band 4.1-like protein 4A from Mus musculus (Mouse).